We begin with the raw amino-acid sequence, 243 residues long: Pleckstrin homology domain-containing family B member 1 (243 aa).

The 108-residue stretch at 21–128 folds into the PH domain; that stretch reads ALVRGGWLWR…WKTALMEANS (108 aa).

As to quaternary structure, binds transducins. Homodimer. Interacts (via PH domain) with MYO1C. Interacts (via PH domain) with MYO7A. In terms of tissue distribution, highly expressed in retina and brain. In retina, abundantly expressed in photoreceptors. Isoform 4 is the predominant isoform expressed in mature olfactory receptor neurons and vestibular and cochlear hair cells. Also expressed in cells with possible sensory function, including peripheral retinal ganglion cells, cochlear interdental cells, and neurons of the circumventricular organ (at protein level).

The protein localises to the membrane. It is found in the cytoplasm. This is Pleckstrin homology domain-containing family B member 1 (Plekhb1) from Mus musculus (Mouse).